The sequence spans 414 residues: Peptide chain release factor subunit 1 (414 aa).

It belongs to the eukaryotic release factor 1 family. In terms of assembly, heterodimer of two subunits, one of which binds GTP.

The protein resides in the cytoplasm. Functionally, directs the termination of nascent peptide synthesis (translation) in response to the termination codons UAA, UAG and UGA. This Methanococcoides burtonii (strain DSM 6242 / NBRC 107633 / OCM 468 / ACE-M) protein is Peptide chain release factor subunit 1.